The chain runs to 399 residues: L-methionine gamma-lyase (399 aa).

Residues 59–61 (YTR) and 89–90 (GI) each bind pyridoxal 5'-phosphate. Residue Tyr114 coordinates substrate. 209 to 211 (SAT) serves as a coordination point for pyridoxal 5'-phosphate. The residue at position 212 (Lys212) is an N6-(pyridoxal phosphate)lysine. Position 376 (Arg376) interacts with substrate.

The protein belongs to the trans-sulfuration enzymes family. L-methionine gamma-lyase subfamily. As to quaternary structure, homotetramer; dimer of active dimers. Pyridoxal 5'-phosphate is required as a cofactor.

The catalysed reaction is L-methionine + H2O = methanethiol + 2-oxobutanoate + NH4(+). It catalyses the reaction L-homocysteine + H2O = 2-oxobutanoate + hydrogen sulfide + NH4(+) + H(+). Functionally, catalyzes the alpha,gamma-elimination of L-methionine to produce methanethiol, 2-oxobutanoate and ammonia; methanethiol (methyl mercaptan) is considered to be one of the main causes of the oral malodor in periodontal disease and may also play a role in the pathogenicity of P.gingivalis in that disease. Is also able to catalyze the alpha,gamma-elimination of L-homocysteine. In Porphyromonas gingivalis (strain ATCC BAA-308 / W83), this protein is L-methionine gamma-lyase.